A 78-amino-acid chain; its full sequence is Acyl carrier protein (78 aa).

Residues 2–77 form the Carrier domain; sequence STIEERVKKI…AAIDYVNAHQ (76 aa). Ser-37 is subject to O-(pantetheine 4'-phosphoryl)serine.

The protein belongs to the acyl carrier protein (ACP) family. Post-translationally, 4'-phosphopantetheine is transferred from CoA to a specific serine of apo-ACP by AcpS. This modification is essential for activity because fatty acids are bound in thioester linkage to the sulfhydryl of the prosthetic group.

It localises to the cytoplasm. The protein operates within lipid metabolism; fatty acid biosynthesis. Carrier of the growing fatty acid chain in fatty acid biosynthesis. In Pseudomonas entomophila (strain L48), this protein is Acyl carrier protein.